A 183-amino-acid polypeptide reads, in one-letter code: MKQKPEDWLNDVPDNQEDDEDDEIIWVSKSEIKRDAEALKDLGAELVDLGKNALEKIPLDDDLRAAVELAQRITREGRRRQLQLIGKLLRARDPEPIQIALDKLNNRHNQQVALFHKLEQLRDRLITEGDDVIPEILALYSHADRQQLRSLVRNAQKEKAANKPPKAARQIFQYLRELAETTN.

A disordered region spans residues 1–21 (MKQKPEDWLNDVPDNQEDDED).

It belongs to the DarP family.

The protein localises to the cytoplasm. Functionally, member of a network of 50S ribosomal subunit biogenesis factors which assembles along the 30S-50S interface, preventing incorrect 23S rRNA structures from forming. Promotes peptidyl transferase center (PTC) maturation. This is Dual-action ribosomal maturation protein DarP from Pectobacterium atrosepticum (strain SCRI 1043 / ATCC BAA-672) (Erwinia carotovora subsp. atroseptica).